Here is a 426-residue protein sequence, read N- to C-terminus: Oligouridylate-binding protein 1A (426 aa).

Residues 1–26 are disordered; it reads MQNQRLIKQQQQQQQQQHQQAMIQQA. Over residues 9–26 the composition is skewed to low complexity; sequence QQQQQQQQQHQQAMIQQA. 2 RRM domains span residues 63-137 and 148-226; these read RSVY…WAYA and FNIF…WATK. The disordered stretch occupies residues 230 to 268; the sequence is FGEDKHSSDGKSVVELTNGSSEDGRELSNEDAPENNPQF. At Ser250 the chain carries Phosphoserine. The RRM 3 domain maps to 269–344; sequence TTVYVGNLSP…RQIRCSWGNK (76 aa).

In terms of assembly, interacts with UBA1A and UBA2A.

Its subcellular location is the nucleus. Its function is as follows. Heterogeneous nuclear ribonucleoprotein (hnRNP)-like protein that acts as a component of the pre-mRNA processing machinery. Functions to facilitate the nuclear maturation of plant pre-mRNAs. In Arabidopsis thaliana (Mouse-ear cress), this protein is Oligouridylate-binding protein 1A (UBP1A).